A 382-amino-acid chain; its full sequence is Mannitol-1-phosphate 5-dehydrogenase (382 aa).

Position 3–14 (3–14 (ALHFGAGNIGRG)) interacts with NAD(+). Lys-269 carries the post-translational modification N6-acetyllysine.

Belongs to the mannitol dehydrogenase family.

It carries out the reaction D-mannitol 1-phosphate + NAD(+) = beta-D-fructose 6-phosphate + NADH + H(+). The chain is Mannitol-1-phosphate 5-dehydrogenase from Escherichia coli O81 (strain ED1a).